The primary structure comprises 239 residues: Lipoprotein-releasing system ATP-binding protein LolD (239 aa).

In terms of domain architecture, ABC transporter spans 10–239 (VELSGVRKDY…ADGPHRRSGA (230 aa)). Residue 46 to 53 (GPSGSGKS) coordinates ATP.

This sequence belongs to the ABC transporter superfamily. Lipoprotein translocase (TC 3.A.1.125) family. In terms of assembly, the complex is composed of two ATP-binding proteins (LolD) and two transmembrane proteins (LolC and LolE).

The protein resides in the cell inner membrane. In terms of biological role, part of the ABC transporter complex LolCDE involved in the translocation of mature outer membrane-directed lipoproteins, from the inner membrane to the periplasmic chaperone, LolA. Responsible for the formation of the LolA-lipoprotein complex in an ATP-dependent manner. The chain is Lipoprotein-releasing system ATP-binding protein LolD from Anaeromyxobacter dehalogenans (strain 2CP-C).